The following is a 514-amino-acid chain: Putative ankyrin repeat protein R863 (514 aa).

ANK repeat units follow at residues 45–74 (AKID…LKHP), 84–114 (KSLN…DINS), 115–144 (KKNR…DVRA), 146–174 (KDYA…NIKV), 176–204 (DNFA…NIRA), 205–234 (DNNY…DIRA), 236–264 (NNYA…NVKS), 266–294 (NDCA…DVRS), 295–324 (ENDY…NVRA), 325–354 (DNNY…NIRS), 356–384 (NDYA…NFKS), 385–414 (DYDC…DIRV), 415–444 (NNDY…DIRA), 446–474 (NDYA…NVKA), and 476–504 (NNYA…DVRS).

The chain is Putative ankyrin repeat protein R863 from Acanthamoeba polyphaga mimivirus (APMV).